Here is a 290-residue protein sequence, read N- to C-terminus: Beta carbonic anhydrase 6, mitochondrial (290 aa).

Residues 1–20 (MAFTLGGRARRLVSATSVHQ) constitute a mitochondrion transit peptide. S122 bears the Phosphoserine mark. Residue C226 is modified to S-nitrosocysteine.

It belongs to the beta-class carbonic anhydrase family. Strongly expressed in aerial tissues including leaves, stems, flowers and siliques, and, to a lower extent, in roots. Accumulates in guard cells.

It is found in the mitochondrion. The enzyme catalyses hydrogencarbonate + H(+) = CO2 + H2O. Its function is as follows. Reversible hydration of carbon dioxide. The protein is Beta carbonic anhydrase 6, mitochondrial (BCA6) of Arabidopsis thaliana (Mouse-ear cress).